The chain runs to 346 residues: PPE family protein PPE17 (346 aa).

Residues 6 to 159 form a PPE region; sequence FPPEFNSLNI…LYATMAAAAA (154 aa).

It belongs to the mycobacterial PPE family. In terms of assembly, interacts with LRR motifs 15-20 of host Toll-like receptor 2 (TLR2).

The protein localises to the secreted. It localises to the cell wall. The protein resides in the cell surface. Its function is as follows. Induces pro-inflammatory responses. Induces host TLR1/2 heterodimerization, which causes an increased recruitment of IRAK1, MYD88, and protein kinase C epsilon (PRKCE) to the downstream TLR-signaling complex that translocates PRKCE into the nucleus in an IRAK1-dependent manner. PRKCE-mediated phosphorylation allowed the nuclear IRAK3 to be exported to the cytoplasm, leading to increased activation of ERK1/2, stabilization of MAPK phosphatase 1 (MKP1), and induction of TNF-alpha with concomitant down-regulation of MAP kinase p38. During M.tuberculosis and HIV-1 co-infection, can stimulate transcription from the long terminal repeat (LTR) of HIV-1 in monocyte/macrophage cells. Interaction with human TLR2 activates the NF-kappa-B transcription factor, which binds to the promoter region of the HIV-1 and induces HIV-1 gene expression. This is PPE family protein PPE17 (PPE17) from Mycobacterium tuberculosis (strain ATCC 25618 / H37Rv).